The following is a 448-amino-acid chain: Exodeoxyribonuclease 7 large subunit (448 aa).

Belongs to the XseA family. As to quaternary structure, heterooligomer composed of large and small subunits.

Its subcellular location is the cytoplasm. The enzyme catalyses Exonucleolytic cleavage in either 5'- to 3'- or 3'- to 5'-direction to yield nucleoside 5'-phosphates.. Functionally, bidirectionally degrades single-stranded DNA into large acid-insoluble oligonucleotides, which are then degraded further into small acid-soluble oligonucleotides. The protein is Exodeoxyribonuclease 7 large subunit of Nitrosomonas eutropha (strain DSM 101675 / C91 / Nm57).